Consider the following 195-residue polypeptide: Der GTPase-activating protein YihI (195 aa).

The interval 1-81 (MSRTKKTRRI…KAVVKEVKDP (81 aa)) is disordered. 3 stretches are compositionally biased toward basic and acidic residues: residues 9–23 (RITDIMPARKTDKPK), 38–49 (TRYELDAQAREE), and 66–81 (DPAEQKKAVVKEVKDP).

It belongs to the YihI family. In terms of assembly, interacts with Der.

Functionally, a GTPase-activating protein (GAP) that modifies Der/EngA GTPase function. May play a role in ribosome biogenesis. The sequence is that of Der GTPase-activating protein YihI from Mannheimia haemolytica (Pasteurella haemolytica).